The sequence spans 535 residues: Probable serine/threonine protein phosphatase 2A regulatory subunit B''delta (535 aa).

Positions 67 to 104 (SGTNSGSNSPLASMFPARNGPPLSPRNSTGSPRIARQR) are disordered. 2 EF-hand domains span residues 174–209 (VPSF…GNML) and 387–422 (SSEP…QLHR). Ca(2+) contacts are provided by Asp400, Asp402, Asn404, and Glu411.

In terms of assembly, PP2A consists of a common heterodimeric core enzyme, composed of a 36 kDa catalytic subunit (subunit C) and a 65 kDa constant regulatory subunit (PR65 or subunit A), that associates with a variety of regulatory subunits. Proteins that associate with the core dimer include three families of regulatory subunits B (the R2/B/PR55/B55, R3/B''/PR72/PR130/PR59 and R5/B'/B56 families) and cell signaling molecules.

Its function is as follows. Probable regulatory subunit of type 2A protein phosphatase. In Arabidopsis thaliana (Mouse-ear cress), this protein is Probable serine/threonine protein phosphatase 2A regulatory subunit B''delta (B''DELTA).